The sequence spans 819 residues: Endonuclease MutS2 (819 aa).

ATP is bound at residue 339–346; the sequence is GPNTGGKT. The region spanning 744–819 is the Smr domain; the sequence is VDVRGLRVDE…GAGVTVAELA (76 aa).

It belongs to the DNA mismatch repair MutS family. MutS2 subfamily. As to quaternary structure, homodimer. Binds to stalled ribosomes, contacting rRNA.

Functionally, endonuclease that is involved in the suppression of homologous recombination and thus may have a key role in the control of bacterial genetic diversity. Acts as a ribosome collision sensor, splitting the ribosome into its 2 subunits. Detects stalled/collided 70S ribosomes which it binds and splits by an ATP-hydrolysis driven conformational change. Acts upstream of the ribosome quality control system (RQC), a ribosome-associated complex that mediates the extraction of incompletely synthesized nascent chains from stalled ribosomes and their subsequent degradation. Probably generates substrates for RQC. The sequence is that of Endonuclease MutS2 from Gemmatimonas aurantiaca (strain DSM 14586 / JCM 11422 / NBRC 100505 / T-27).